A 115-amino-acid polypeptide reads, in one-letter code: Fluoride-specific ion channel FluC 4 (115 aa).

A run of 2 helical transmembrane segments spans residues 19–39 (WGTF…AGLG) and 42–62 (LGGI…LLGG). Residues glycine 61 and threonine 64 each contribute to the Na(+) site. The chain crosses the membrane as a helical span at residues 89–109 (IVASALLCVLAVAAGYGGIMW).

This sequence belongs to the fluoride channel Fluc/FEX (TC 1.A.43) family.

The protein localises to the cell inner membrane. The enzyme catalyses fluoride(in) = fluoride(out). With respect to regulation, na(+) is not transported, but it plays an essential structural role and its presence is essential for fluoride channel function. Its function is as follows. Fluoride-specific ion channel. Important for reducing fluoride concentration in the cell, thus reducing its toxicity. The polypeptide is Fluoride-specific ion channel FluC 4 (Brucella melitensis biotype 1 (strain ATCC 23456 / CCUG 17765 / NCTC 10094 / 16M)).